The sequence spans 350 residues: Putative deoxyribonuclease-2 (350 aa).

Belongs to the DNase II family.

In Burkholderia thailandensis (strain ATCC 700388 / DSM 13276 / CCUG 48851 / CIP 106301 / E264), this protein is Putative deoxyribonuclease-2.